Consider the following 141-residue polypeptide: Nucleoside diphosphate kinase (141 aa).

Positions 11, 59, 87, 93, 104, and 114 each coordinate ATP. The Pros-phosphohistidine intermediate role is filled by His-117.

It belongs to the NDK family. In terms of assembly, homotetramer. Requires Mg(2+) as cofactor.

The protein localises to the cytoplasm. The enzyme catalyses a 2'-deoxyribonucleoside 5'-diphosphate + ATP = a 2'-deoxyribonucleoside 5'-triphosphate + ADP. It catalyses the reaction a ribonucleoside 5'-diphosphate + ATP = a ribonucleoside 5'-triphosphate + ADP. In terms of biological role, major role in the synthesis of nucleoside triphosphates other than ATP. The ATP gamma phosphate is transferred to the NDP beta phosphate via a ping-pong mechanism, using a phosphorylated active-site intermediate. The protein is Nucleoside diphosphate kinase of Pseudomonas fluorescens (strain SBW25).